We begin with the raw amino-acid sequence, 497 residues long: Angiopoietin-1 (497 aa).

Residues 1–19 form the signal peptide; sequence MTVFLSFAFFAAILTHIGC. A coiled-coil region spans residues 81 to 119; it reads QKLQHLEHVMENYTQWLQKLENYIVENMKSEMAQIQQNA. 5 N-linked (GlcNAc...) asparagine glycosylation sites follow: asparagine 92, asparagine 122, asparagine 154, asparagine 243, and asparagine 294. The stretch at 153–261 forms a coiled coil; the sequence is LNQTSRLEIQ…LELMDTVHNL (109 aa). The 221-residue stretch at 276 to 496 folds into the Fibrinogen C-terminal domain; the sequence is REEEKPFRDC…STTMMIRPLD (221 aa). 2 cysteine pairs are disulfide-bonded: cysteine 285/cysteine 314 and cysteine 438/cysteine 451.

Homooligomer. Interacts with TEK/TIE2. Interacts with SVEP1/polydom. Interacts with THBD; this interaction significantly inhibits the generation of activated PC and TAFIa/CPB2 by the thrombin/thrombomodulin complex.

It localises to the secreted. Binds and activates TIE2 receptor by inducing its tyrosine phosphorylation. Implicated in endothelial developmental processes later and distinct from that of VEGF. Appears to play a crucial role in mediating reciprocal interactions between the endothelium and surrounding matrix and mesenchyme. Mediates blood vessel maturation/stability. It may play an important role in the heart early development. The protein is Angiopoietin-1 (Angpt1) of Rattus norvegicus (Rat).